Here is a 359-residue protein sequence, read N- to C-terminus: Histidinol-phosphate aminotransferase (359 aa).

Position 217 is an N6-(pyridoxal phosphate)lysine (Lys217).

Belongs to the class-II pyridoxal-phosphate-dependent aminotransferase family. Histidinol-phosphate aminotransferase subfamily. In terms of assembly, homodimer. Pyridoxal 5'-phosphate is required as a cofactor.

The catalysed reaction is L-histidinol phosphate + 2-oxoglutarate = 3-(imidazol-4-yl)-2-oxopropyl phosphate + L-glutamate. Its pathway is amino-acid biosynthesis; L-histidine biosynthesis; L-histidine from 5-phospho-alpha-D-ribose 1-diphosphate: step 7/9. This is Histidinol-phosphate aminotransferase from Salmonella heidelberg (strain SL476).